Consider the following 698-residue polypeptide: Protein no-on-transient A (698 aa).

Residues 1 to 29 are compositionally biased toward polar residues; that stretch reads MENSVKMDTSGNSTPLPQRQARANNQPNK. Positions 1–247 are disordered; sequence MENSVKMDTS…SGGGNNSQRG (247 aa). Gly residues predominate over residues 61–86; it reads NGGGGSVGGGGGGGGGSGGGGGGGGQ. Low complexity-rich tracts occupy residues 108–126 and 145–197; these read RGGN…NQKS and ANNA…QNQA. Gly residues-rich tracts occupy residues 201-220 and 228-242; these read RGGG…GGGG and SRGG…GGGN. 2 consecutive RRM domains span residues 281–353 and 355–441; these read NRLY…FAPN and TILR…DDND. Positions 484–582 form a coiled coil; that stretch reads DLFKSKQDAL…DMRRRQQENT (99 aa). Disordered regions lie at residues 515–571 and 597–698; these read QETE…VRQE and QEGF…RRRF. Residues 518-561 show a composition bias toward basic and acidic residues; sequence ELSRQELRKRESDNERKKLEWEMREKQAEEMRKREEETMRRHQT. Over residues 599 to 623 the composition is skewed to gly residues; that stretch reads GFGGGNNGGGGGGGGGGGGVGGGVG. 2 stretches are compositionally biased toward low complexity: residues 624–636 and 643–660; these read NSNF…NSNS and GNNN…GANN.

Required for normal vision and courtship behavior in Drosophila. The chain is Protein no-on-transient A (nonA) from Drosophila littoralis (Fruit fly).